Reading from the N-terminus, the 101-residue chain is uncharacterized protein (101 aa).

Residues 1 to 18 form the signal peptide; the sequence is MSINALLYVLSLALLIWT. The helical transmembrane segment at 62–82 threads the bilayer; sequence FQFDSIPSSSLSLSPFPFLFF.

The protein resides in the membrane. This is an uncharacterized protein from Saccharomyces cerevisiae (strain ATCC 204508 / S288c) (Baker's yeast).